We begin with the raw amino-acid sequence, 384 residues long: Centrosomal protein of 44 kDa (384 aa).

Positions 11-188 (RKLEQRLRTL…TKCYSSALVE (178 aa)) are binds with microtubules and centrioles. The disordered stretch occupies residues 191 to 222 (EEEEPTSDSEGGSHLEHEMESPFETAETTPNS). The segment covering 201-210 (GGSHLEHEME) has biased composition (basic and acidic residues). 2 coiled-coil regions span residues 221–260 (NSEQ…KGKI) and 353–378 (TEDS…SKLL).

In terms of assembly, binds to centriolar microtubules.

Its subcellular location is the cytoplasm. It localises to the cytoskeleton. It is found in the microtubule organizing center. The protein localises to the centrosome. The protein resides in the centriole. Its subcellular location is the spindle pole. It localises to the midbody. Its function is as follows. Centriole-enriched microtubule-binding protein involved in centriole biogenesis. In collaboration with CEP295 and POC1B, is required for the centriole-to-centrosome conversion by ensuring the formation of bona fide centriole wall. Functions as a linker component that maintains centrosome cohesion. Associates with CROCC and regulates its stability and localization to the centrosome. The sequence is that of Centrosomal protein of 44 kDa (cep44) from Xenopus laevis (African clawed frog).